A 364-amino-acid chain; its full sequence is Putative galactoside 2-alpha-L-fucosyltransferase svh-11 (364 aa).

The Cytoplasmic portion of the chain corresponds to 1–19 (MRLFHFLKFLTINNFSRYC). The helical; Signal-anchor for type II membrane protein transmembrane segment at 20 to 42 (LKIVKVHIIWITIICIIYFNWRF) threads the bilayer. Residues 43 to 364 (KKLDFMAIPY…SANSFTVVRS (322 aa)) lie on the Lumenal side of the membrane. N-linked (GlcNAc...) asparagine glycosylation is found at Asn60 and Asn128.

It belongs to the glycosyltransferase 11 family.

The protein localises to the golgi apparatus. It is found in the golgi stack membrane. Functionally, mediates the transfer of fucose to the terminal galactose on glycan chains of cell surface glycoproteins and glycolipids. Required for axon regeneration after injury. The polypeptide is Putative galactoside 2-alpha-L-fucosyltransferase svh-11 (Caenorhabditis elegans).